We begin with the raw amino-acid sequence, 181 residues long: MASAGSGMEEVRVSVLTPLKLVGLVCIFLALCLDLGAVLSPAWVTADHQYYLSLWESCRKPASLDIWHCESTLSSDWQIATLALLLGGAAIILIAFLVGLISICVGSRRRFYRPVAVMLFAAVVLQVCSLVLYPIKFIETVSLKIYHEFNWGYGLAWGATIFSFGGAILYCLNPKNYEDYY.

Position 2 is an N-acetylalanine (Ala2). 4 consecutive transmembrane segments (helical) span residues Leu21–Pro41, Ala83–Ile103, Val115–Ile135, and Gly152–Leu172.

It belongs to the TMEM47 family. As to quaternary structure, interacts with CTNNB1, CTNNA1, PRKCI, PARD6B, FYB1. In terms of tissue distribution, expressed in adult brain, fetal brain, cerebellum, heart, lung, prostate and thyroid.

The protein resides in the membrane. It is found in the cell junction. Its subcellular location is the adherens junction. Regulates cell junction organization in epithelial cells. May play a role in the transition from adherens junction to tight junction assembly. May regulate F-actin polymerization required for tight junctional localization dynamics and affect the junctional localization of PARD6B. During podocyte differentiation may negatively regulate activity of FYN and subsequently the abundance of nephrin. This Homo sapiens (Human) protein is Transmembrane protein 47 (TMEM47).